Consider the following 307-residue polypeptide: Glutathione synthetase (307 aa).

The ATP-grasp domain occupies 120 to 304 (KLGALRYSHL…VSDKVIEKLL (185 aa)). Position 146–202 (146–202 (AQINHDVVVKPLGGKGGQGVIRLTKDSPGIKAMIELITSQEQLPVMMQKFIPEVKEG)) interacts with ATP. Positions 275 and 277 each coordinate Mg(2+).

This sequence belongs to the prokaryotic GSH synthase family. It depends on Mg(2+) as a cofactor. Requires Mn(2+) as cofactor.

The catalysed reaction is gamma-L-glutamyl-L-cysteine + glycine + ATP = glutathione + ADP + phosphate + H(+). It functions in the pathway sulfur metabolism; glutathione biosynthesis; glutathione from L-cysteine and L-glutamate: step 2/2. This chain is Glutathione synthetase, found in Prochlorococcus marinus subsp. pastoris (strain CCMP1986 / NIES-2087 / MED4).